Reading from the N-terminus, the 258-residue chain is Small ribosomal subunit protein mS35 (258 aa).

The transit peptide at 1–39 (MAFNPLLSLLKADAIFLGQLSKSSFCATSRAFSVFYFTR) directs the protein to the mitochondrion.

This sequence belongs to the mitochondrion-specific ribosomal protein mS35 family. As to quaternary structure, component of the mitochondrial small ribosomal subunit (mt-SSU). Mature yeast 74S mitochondrial ribosomes consist of a small (37S) and a large (54S) subunit. The 37S small subunit contains a 15S ribosomal RNA (15S mt-rRNA) and at least 32 different proteins. The 54S large subunit contains a 21S rRNA (21S mt-rRNA) and at least 45 different proteins.

Its subcellular location is the mitochondrion. Functionally, component of the mitochondrial ribosome (mitoribosome), a dedicated translation machinery responsible for the synthesis of mitochondrial genome-encoded proteins, including at least some of the essential transmembrane subunits of the mitochondrial respiratory chain. The mitoribosomes are attached to the mitochondrial inner membrane and translation products are cotranslationally integrated into the membrane. This Schizosaccharomyces pombe (strain 972 / ATCC 24843) (Fission yeast) protein is Small ribosomal subunit protein mS35 (rsm24).